The chain runs to 437 residues: F-box protein At3g62430 (437 aa).

The 49-residue stretch at 1 to 49 folds into the F-box domain; sequence MDRISNLPDGVIYRVISLLSTKEATCLKYTSKNWLNLVTIIPIAVFVDS.

This is F-box protein At3g62430 from Arabidopsis thaliana (Mouse-ear cress).